The following is a 131-amino-acid chain: Profilin-4 (131 aa).

Residues Cys13 and Cys115 are joined by a disulfide bond. The short motif at 81–97 (AVIRGKKGAGGITVKKT) is the Involved in PIP2 interaction element. Thr111 carries the phosphothreonine modification.

The protein belongs to the profilin family. In terms of assembly, occurs in many kinds of cells as a complex with monomeric actin in a 1:1 ratio. Phosphorylated by MAP kinases.

The protein resides in the cytoplasm. It is found in the cytoskeleton. Functionally, binds to actin and affects the structure of the cytoskeleton. At high concentrations, profilin prevents the polymerization of actin, whereas it enhances it at low concentrations. The polypeptide is Profilin-4 (Olea europaea (Common olive)).